The chain runs to 210 residues: Proline-rich protein 20G (210 aa).

Residues 1–11 (MEEPRHSKRPR) are compositionally biased toward basic residues. Positions 1–82 (MEEPRHSKRP…GGSWRAGRGR (82 aa)) are disordered. Residues 69-82 (GQRGGGSWRAGRGR) show a composition bias toward gly residues.

The protein belongs to the PRR20 family.

The polypeptide is Proline-rich protein 20G (Homo sapiens (Human)).